Here is a 498-residue protein sequence, read N- to C-terminus: Ribose import ATP-binding protein RbsA 1 (498 aa).

ABC transporter domains lie at 7 to 243 (LHIQ…VGRR) and 254 to 496 (PRGE…IGKS). Residue 39–46 (GENGAGKS) participates in ATP binding.

Belongs to the ABC transporter superfamily. Ribose importer (TC 3.A.1.2.1) family. In terms of assembly, the complex is composed of an ATP-binding protein (RbsA), two transmembrane proteins (RbsC) and a solute-binding protein (RbsB).

It is found in the cell inner membrane. It carries out the reaction D-ribose(out) + ATP + H2O = D-ribose(in) + ADP + phosphate + H(+). Functionally, part of the ABC transporter complex RbsABC involved in ribose import. Responsible for energy coupling to the transport system. The polypeptide is Ribose import ATP-binding protein RbsA 1 (Pasteurella multocida (strain Pm70)).